A 3072-amino-acid chain; its full sequence is E1A-binding protein p400 (3072 aa).

Positions Met1–Gly22 are enriched in polar residues. Disordered regions lie at residues Met1–Tyr55, Pro125–Val149, and Leu222–Gln250. The span at Pro31–Pro40 shows a compositional bias: pro residues. Composition is skewed to low complexity over residues Phe41–Pro53 and Pro125–Thr136. 2 positions are modified to phosphoserine: Ser52 and Ser134. Ser315 and Ser321 each carry phosphoserine. 3 disordered regions span residues Ser485–Arg519, Met544–Pro601, and Ala635–Lys769. The segment covering Gln556–Gln569 has biased composition (low complexity). Over residues Tyr570–Ser583 the composition is skewed to polar residues. Over residues Thr586–Ser599 the composition is skewed to pro residues. 3 stretches are compositionally biased toward low complexity: residues Pro646–Leu657, Gln668–Thr682, and Ser695–Gly710. Polar residues-rich tracts occupy residues Asn724 to Ser741 and Ser754 to Gly765. Ser735, Ser741, and Ser754 each carry phosphoserine. The 73-residue stretch at Leu798–Ala870 folds into the HSA domain. Positions Glu914–Leu928 are enriched in basic and acidic residues. 2 disordered regions span residues Glu914–Glu952 and Phe997–Ser1024. Thr922 is subject to Phosphothreonine. Phosphoserine is present on residues Ser923, Ser927, and Ser940. Position 944 is a phosphothreonine (Thr944). The tract at residues Asp950–Gln1364 is interactions with RUVBL1 and RUVBL2. Ser1009 and Ser1010 each carry phosphoserine. Residues Ala1102–Gly1267 enclose the Helicase ATP-binding domain. Asp1115–Thr1122 lines the ATP pocket. The DEAD box-like signature appears at Asp1218–Gln1221. Lys1471 bears the N6-acetyllysine mark. Positions Glu1473–Gly1503 are disordered. Over residues Ala1488 to Gly1499 the composition is skewed to polar residues. A phosphoserine mark is found at Ser1646 and Ser1650. The Helicase C-terminal domain maps to Lys1815–Thr1972. Disordered stretches follow at residues Ala2033–Pro2062 and Lys2203–Val2227. Over residues Gly2043 to Ser2053 the composition is skewed to low complexity. Residues Lys2265 and Lys2272 each carry the N6-acetyllysine modification. One can recognise a Myb-like domain in the interval Glu2276–Ile2345. An interaction with ZNF42 region spans residues Lys2440–Thr2699. The segment at Glu2441–Thr2534 is disordered. Low complexity-rich tracts occupy residues Ala2446 to Pro2455 and Gln2463 to Gln2478. Residues Gln2479–Gln2493 show a composition bias toward pro residues. Over residues Pro2494–Gln2526 the composition is skewed to low complexity. Residue Ser2614 is modified to Phosphoserine. Disordered stretches follow at residues Gln2734–Thr2790 and Ala3028–Gln3072. Over residues Pro2739–Gln2754 the composition is skewed to pro residues. Low complexity predominate over residues Pro2755–Thr2775. The span at Pro3042 to Lys3053 shows a compositional bias: polar residues.

It belongs to the SNF2/RAD54 helicase family. SWR1 subfamily. In terms of assembly, component of the NuA4 histone acetyltransferase complex which contains the catalytic subunit KAT5/TIP60 and the subunits EP400, TRRAP/PAF400, BRD8/SMAP, EPC1, DMAP1/DNMAP1, RUVBL1/TIP49, RUVBL2, ING3, actin, ACTL6A/BAF53A, MORF4L1/MRG15, MORF4L2/MRGX, MRGBP, YEATS4/GAS41, VPS72/YL1 and MEAF6. May also participate in the formation of NuA4 related complexes which lack the KAT5/TIP60 catalytic subunit, but which include the SWI/SNF related protein SRCAP. The NuA4 complex interacts with MYC. EP400 interacts with TRRAP, RUVBL1 and RUVBL2. Component of a SWR1-like complex. Interacts with ZNF42. Interacts with PHF5A. Expressed in brain, thymus, lung, liver, spleen, kidney, colon and bone marrow.

The protein localises to the nucleus. Its function is as follows. Component of the NuA4 histone acetyltransferase complex which is involved in transcriptional activation of select genes principally by acetylation of nucleosomal histones H4 and H2A. This modification may both alter nucleosome - DNA interactions and promote interaction of the modified histones with other proteins which positively regulate transcription. May be required for transcriptional activation of E2F1 and MYC target genes during cellular proliferation. The NuA4 complex ATPase and helicase activities seem to be, at least in part, contributed by the association of RUVBL1 and RUVBL2 with EP400. Component of a SWR1-like complex that specifically mediates the removal of histone H2A.Z/H2AZ1 from the nucleosome. Regulates transcriptional activity of ZNF42. In Mus musculus (Mouse), this protein is E1A-binding protein p400 (Ep400).